The chain runs to 263 residues: 4-hydroxy-tetrahydrodipicolinate reductase (263 aa).

NAD(+) contacts are provided by residues 7–12 (GFKGRM), 96–98 (GTT), and 122–125 (APNF). The active-site Proton donor/acceptor is H152. H153 contributes to the (S)-2,3,4,5-tetrahydrodipicolinate binding site. The active-site Proton donor is the K156. (S)-2,3,4,5-tetrahydrodipicolinate is bound at residue 162–163 (GT).

The protein belongs to the DapB family.

The protein localises to the cytoplasm. It catalyses the reaction (S)-2,3,4,5-tetrahydrodipicolinate + NAD(+) + H2O = (2S,4S)-4-hydroxy-2,3,4,5-tetrahydrodipicolinate + NADH + H(+). It carries out the reaction (S)-2,3,4,5-tetrahydrodipicolinate + NADP(+) + H2O = (2S,4S)-4-hydroxy-2,3,4,5-tetrahydrodipicolinate + NADPH + H(+). It participates in amino-acid biosynthesis; L-lysine biosynthesis via DAP pathway; (S)-tetrahydrodipicolinate from L-aspartate: step 4/4. Functionally, catalyzes the conversion of 4-hydroxy-tetrahydrodipicolinate (HTPA) to tetrahydrodipicolinate. This Listeria monocytogenes serotype 4b (strain F2365) protein is 4-hydroxy-tetrahydrodipicolinate reductase.